The primary structure comprises 171 residues: Pro-corazonin (171 aa).

A signal peptide spans 1-20; it reads MLHTRTIALLLVGLVVLVNA. Glutamine 21 bears the Pyrrolidone carboxylic acid mark. Residue asparagine 31 is modified to Asparagine amide. Positions 82-171 are excised as a propeptide; sequence FLRNPCDLRV…GFSDHRQKIA (90 aa).

This sequence belongs to the corazonin family.

Its subcellular location is the secreted. In terms of biological role, cardioactive peptide. Corazonin is probably involved in the physiological regulation of the heart beat. The protein is Pro-corazonin of Anopheles gambiae (African malaria mosquito).